The primary structure comprises 150 residues: Ribosomal RNA large subunit methyltransferase H (150 aa).

Residues A100 and 118–123 (LSEMTF) contribute to the S-adenosyl-L-methionine site.

It belongs to the RNA methyltransferase RlmH family. As to quaternary structure, homodimer.

Its subcellular location is the cytoplasm. It catalyses the reaction pseudouridine(1915) in 23S rRNA + S-adenosyl-L-methionine = N(3)-methylpseudouridine(1915) in 23S rRNA + S-adenosyl-L-homocysteine + H(+). In terms of biological role, specifically methylates the pseudouridine at position 1915 (m3Psi1915) in 23S rRNA. The sequence is that of Ribosomal RNA large subunit methyltransferase H from Helicobacter pylori (strain P12).